The following is a 170-amino-acid chain: ATP synthase subunit b (170 aa).

A helical membrane pass occupies residues 22–41; it reads ILNWAVVVFGLYKFLPGFLG. The tract at residues 72–98 is disordered; sequence AKKDLSSAEEKASQIKADSLKRSESIR.

It belongs to the ATPase B chain family. F-type ATPases have 2 components, F(1) - the catalytic core - and F(0) - the membrane proton channel. F(1) has five subunits: alpha(3), beta(3), gamma(1), delta(1), epsilon(1). F(0) has four main subunits: a(1), b(1), b'(1) and c(10-14). The alpha and beta chains form an alternating ring which encloses part of the gamma chain. F(1) is attached to F(0) by a central stalk formed by the gamma and epsilon chains, while a peripheral stalk is formed by the delta, b and b' chains.

Its subcellular location is the cellular thylakoid membrane. Its function is as follows. F(1)F(0) ATP synthase produces ATP from ADP in the presence of a proton or sodium gradient. F-type ATPases consist of two structural domains, F(1) containing the extramembraneous catalytic core and F(0) containing the membrane proton channel, linked together by a central stalk and a peripheral stalk. During catalysis, ATP synthesis in the catalytic domain of F(1) is coupled via a rotary mechanism of the central stalk subunits to proton translocation. Component of the F(0) channel, it forms part of the peripheral stalk, linking F(1) to F(0). The protein is ATP synthase subunit b of Prochlorococcus marinus (strain MIT 9301).